Consider the following 306-residue polypeptide: D-alanine--D-alanine ligase (306 aa).

An ATP-grasp domain is found at Lys-104–Glu-303. Residue Val-134–Thr-189 participates in ATP binding. Mg(2+)-binding residues include Asp-257, Glu-270, and Asn-272.

It belongs to the D-alanine--D-alanine ligase family. The cofactor is Mg(2+). It depends on Mn(2+) as a cofactor.

The protein localises to the cytoplasm. The catalysed reaction is 2 D-alanine + ATP = D-alanyl-D-alanine + ADP + phosphate + H(+). The protein operates within cell wall biogenesis; peptidoglycan biosynthesis. Cell wall formation. This chain is D-alanine--D-alanine ligase, found in Haemophilus influenzae (strain PittGG).